The following is a 453-amino-acid chain: Trigger factor (453 aa).

The 86-residue stretch at 171-256 (GDRVTISFKG…ASLIEAPQDI (86 aa)) folds into the PPIase FKBP-type domain.

The protein belongs to the FKBP-type PPIase family. Tig subfamily.

It localises to the cytoplasm. The catalysed reaction is [protein]-peptidylproline (omega=180) = [protein]-peptidylproline (omega=0). Functionally, involved in protein export. Acts as a chaperone by maintaining the newly synthesized protein in an open conformation. Functions as a peptidyl-prolyl cis-trans isomerase. The chain is Trigger factor from Nitrobacter hamburgensis (strain DSM 10229 / NCIMB 13809 / X14).